Reading from the N-terminus, the 160-residue chain is Transcription elongation factor GreA (160 aa).

The stretch at methionine 1–isoleucine 71 forms a coiled coil.

This sequence belongs to the GreA/GreB family.

Functionally, necessary for efficient RNA polymerase transcription elongation past template-encoded arresting sites. The arresting sites in DNA have the property of trapping a certain fraction of elongating RNA polymerases that pass through, resulting in locked ternary complexes. Cleavage of the nascent transcript by cleavage factors such as GreA or GreB allows the resumption of elongation from the new 3'terminus. GreA releases sequences of 2 to 3 nucleotides. In Streptococcus uberis (strain ATCC BAA-854 / 0140J), this protein is Transcription elongation factor GreA.